The sequence spans 344 residues: HTH-type transcriptional repressor MelR (344 aa).

An HTH lacI-type domain is found at 2–58 (VRIKDIALKAKVSSATVSRILNEDESLSVAGETRQRVINIAEELGYQTVAKRRKSRG). A DNA-binding region (H-T-H motif) is located at residues 4–23 (IKDIALKAKVSSATVSRILN).

Its subcellular location is the cytoplasm. Functionally, represses the melibiose operon melREDCA in the absence of melibiose or raffinose. Binds to two binding sites at the promoter region of the operon. This Bacillus subtilis (strain 168) protein is HTH-type transcriptional repressor MelR.